A 489-amino-acid chain; its full sequence is Adenylosuccinate synthetase 2, chloroplastic (489 aa).

Residues 1–45 constitute a chloroplast transit peptide; that stretch reads MPFSPPCLDPAAAAAASLSFLPAAAARPPAPCAVAPRSRRALRVA. Residues 76 to 82 and 104 to 106 contribute to the GTP site; these read GDEGKGK and GHT. The active-site Proton acceptor is aspartate 77. Aspartate 77 and glycine 104 together coordinate Mg(2+). IMP contacts are provided by residues 77–80, 102–105, threonine 194, arginine 208, glutamine 288, threonine 303, and arginine 367; these read DEGK and NAGH. The Proton donor role is filled by histidine 105. 363–369 provides a ligand contact to substrate; the sequence is TTTGRPR. GTP contacts are provided by residues arginine 369, 395-397, and 478-480; these read KLD and GVG.

The protein belongs to the adenylosuccinate synthetase family. Homodimer. Mg(2+) serves as cofactor.

The protein resides in the plastid. It is found in the chloroplast. The enzyme catalyses IMP + L-aspartate + GTP = N(6)-(1,2-dicarboxyethyl)-AMP + GDP + phosphate + 2 H(+). It functions in the pathway purine metabolism; AMP biosynthesis via de novo pathway; AMP from IMP: step 1/2. Plays an important role in the de novo pathway and in the salvage pathway of purine nucleotide biosynthesis. Catalyzes the first committed step in the biosynthesis of AMP from IMP. This is Adenylosuccinate synthetase 2, chloroplastic from Oryza sativa subsp. japonica (Rice).